Here is an 845-residue protein sequence, read N- to C-terminus: Lon protease (845 aa).

The Lon N-terminal domain maps to 45–242 (MPILALRNMI…RLLYLLHKEL (198 aa)). Residue 393–400 (GPPGVGKT) participates in ATP binding. Residues 629-811 (NGDAGVVIGL…NEVLKEALLE (183 aa)) enclose the Lon proteolytic domain. Catalysis depends on residues Ser717 and Lys760.

It belongs to the peptidase S16 family. Homohexamer. Organized in a ring with a central cavity.

Its subcellular location is the cytoplasm. It carries out the reaction Hydrolysis of proteins in presence of ATP.. Functionally, ATP-dependent serine protease that mediates the selective degradation of mutant and abnormal proteins as well as certain short-lived regulatory proteins. Required for cellular homeostasis and for survival from DNA damage and developmental changes induced by stress. Degrades polypeptides processively to yield small peptide fragments that are 5 to 10 amino acids long. Binds to DNA in a double-stranded, site-specific manner. In Porphyromonas gingivalis (strain ATCC 33277 / DSM 20709 / CIP 103683 / JCM 12257 / NCTC 11834 / 2561), this protein is Lon protease.